The sequence spans 115 residues: Large ribosomal subunit protein uL24 (115 aa).

Disordered stretches follow at residues 45-77 and 96-115; these read VRQSQKNPQGGRLNKEMPMSASNVMLVDPSTGK and KASGESLGQIAPAKASKAAS.

The protein belongs to the universal ribosomal protein uL24 family. In terms of assembly, part of the 50S ribosomal subunit.

In terms of biological role, one of two assembly initiator proteins, it binds directly to the 5'-end of the 23S rRNA, where it nucleates assembly of the 50S subunit. Functionally, one of the proteins that surrounds the polypeptide exit tunnel on the outside of the subunit. The chain is Large ribosomal subunit protein uL24 from Rhodopirellula baltica (strain DSM 10527 / NCIMB 13988 / SH1).